The sequence spans 483 residues: MTQKLESVGSERKSSEYMWDDGSEHDDVTKIYVRGGTKGIEFIKFGYVKAGELLDGSFHGYSDTGFTQMFEIDHRKNEHLLSVEGYFDYYNDIMYAIQFKTNLKISEIMGYEYSGHKFTLAMEGKKIIGFHGFADVNLRALGAYVTWITPARMEAKGGKGGNEWDDGGDYEAVTKIHGRSDHKGIKDIIFDYVDKDGHPKSETHGPTSGQGYVLEPFEINHLDKEYLMSIDGYYDDASGVIQALQFKTNMKTSELMGYYDDDAVKFTIGCTVNKIIGFHGHAGKNLYSLGAYFTTLPLTKLEYEDSFREKLPKNGASGNLWDDGSFQGVKKVHIYYDGYSVRCVRFDYDDDGKVESREHGPKIVAAVQEGGFVLDYPNEVITSVEGIATVVNTGLSFSTGNVMIKSLTFKTSKGRTSPTFGNVFGNYLSEFKLESQGCAIVGFHGRSSYNSIHGLGAYFFPMPPSHDGKALEEQGGDGGLGGV.

The segment at 1–20 is disordered; sequence MTQKLESVGSERKSSEYMWD. Jacalin-type lectin domains are found at residues 2 to 147, 150 to 295, and 307 to 461; these read TQKL…YVTW, PARM…YFTT, and FREK…YFFP.

This sequence belongs to the jacalin lectin family.

The protein is Jacalin-related lectin 13 (JAL13) of Arabidopsis thaliana (Mouse-ear cress).